The following is a 438-amino-acid chain: Protein phosphatase 2C homolog 2 (438 aa).

The 272-residue stretch at 23 to 294 folds into the PPM-type phosphatase domain; it reads IYGVSAMQGW…DNMTMVIIGF (272 aa). Mn(2+) is bound by residues aspartate 67, glycine 68, aspartate 236, and aspartate 285. Positions 370–438 are disordered; it reads VLTGSDDTEM…EKTPEESKKD (69 aa). Over residues 375–387 the composition is skewed to acidic residues; sequence DDTEMFDNADEDK. The segment covering 398–438 has biased composition (basic and acidic residues); sequence GKTDAKEETEAKPAPEAESSKPADGSEKKQDEKTPEESKKD.

This sequence belongs to the PP2C family. Mg(2+) serves as cofactor. Requires Mn(2+) as cofactor.

The protein localises to the cytoplasm. It is found in the nucleus. It carries out the reaction O-phospho-L-seryl-[protein] + H2O = L-seryl-[protein] + phosphate. The enzyme catalyses O-phospho-L-threonyl-[protein] + H2O = L-threonyl-[protein] + phosphate. Functionally, dephosphorylating regulator for many key proteins. Negatively regulates the endoplasmic reticulum unfolded protein response. In Hypocrea jecorina (strain QM6a) (Trichoderma reesei), this protein is Protein phosphatase 2C homolog 2.